Here is a 426-residue protein sequence, read N- to C-terminus: Serine hydroxymethyltransferase (426 aa).

(6S)-5,6,7,8-tetrahydrofolate is bound by residues L113 and G117–L119. K222 carries the post-translational modification N6-(pyridoxal phosphate)lysine. S363 to F365 provides a ligand contact to (6S)-5,6,7,8-tetrahydrofolate.

This sequence belongs to the SHMT family. In terms of assembly, homodimer. It depends on pyridoxal 5'-phosphate as a cofactor.

The protein resides in the cytoplasm. The enzyme catalyses (6R)-5,10-methylene-5,6,7,8-tetrahydrofolate + glycine + H2O = (6S)-5,6,7,8-tetrahydrofolate + L-serine. It participates in one-carbon metabolism; tetrahydrofolate interconversion. Its pathway is amino-acid biosynthesis; glycine biosynthesis; glycine from L-serine: step 1/1. In terms of biological role, catalyzes the reversible interconversion of serine and glycine with tetrahydrofolate (THF) serving as the one-carbon carrier. This reaction serves as the major source of one-carbon groups required for the biosynthesis of purines, thymidylate, methionine, and other important biomolecules. Also exhibits THF-independent aldolase activity toward beta-hydroxyamino acids, producing glycine and aldehydes, via a retro-aldol mechanism. The protein is Serine hydroxymethyltransferase of Bacteroides thetaiotaomicron (strain ATCC 29148 / DSM 2079 / JCM 5827 / CCUG 10774 / NCTC 10582 / VPI-5482 / E50).